A 118-amino-acid polypeptide reads, in one-letter code: Large ribosomal subunit protein bL20 (118 aa).

It belongs to the bacterial ribosomal protein bL20 family.

Its function is as follows. Binds directly to 23S ribosomal RNA and is necessary for the in vitro assembly process of the 50S ribosomal subunit. It is not involved in the protein synthesizing functions of that subunit. The sequence is that of Large ribosomal subunit protein bL20 from Stutzerimonas stutzeri (strain A1501) (Pseudomonas stutzeri).